Consider the following 339-residue polypeptide: MTQVQTAAVQPDAIPVAAPAPQRWRVADVVALFELPFNDLMFRAQQVHREHFDANAVQLSTLLSIKTGGCEEDCGYCSQSSHHDTGLKAEKLMDVDAVLDAARAAKANGASRFCMGAAWRNPKERHMPALTEMVRGVKELGLETCMTLGMLEDEQAQELANAGLDYYNHNLDTSPEFYGQVISTRTYQDRLDTLDRVRDAGINVCCGGIIGMGESRRERAGLISQLANLNPYPESVPINNLVAIEGTPLEGTAPLDPFEFVRTIAVARITMPKAVVRLSAGREQLDDAMQAMCFLAGANSMFYGDQLLTTSNPQTQRDRALFERLGIRASDADAMQANA.

Positions Asn-55 to Arg-282 constitute a Radical SAM core domain. [4Fe-4S] cluster is bound by residues Cys-70, Cys-74, and Cys-77. Residues Cys-114, Cys-145, Cys-205, and Arg-277 each contribute to the [2Fe-2S] cluster site.

This sequence belongs to the radical SAM superfamily. Biotin synthase family. As to quaternary structure, homodimer. It depends on [4Fe-4S] cluster as a cofactor. [2Fe-2S] cluster serves as cofactor.

It carries out the reaction (4R,5S)-dethiobiotin + (sulfur carrier)-SH + 2 reduced [2Fe-2S]-[ferredoxin] + 2 S-adenosyl-L-methionine = (sulfur carrier)-H + biotin + 2 5'-deoxyadenosine + 2 L-methionine + 2 oxidized [2Fe-2S]-[ferredoxin]. It functions in the pathway cofactor biosynthesis; biotin biosynthesis; biotin from 7,8-diaminononanoate: step 2/2. Functionally, catalyzes the conversion of dethiobiotin (DTB) to biotin by the insertion of a sulfur atom into dethiobiotin via a radical-based mechanism. The protein is Biotin synthase of Burkholderia ambifaria (strain MC40-6).